The sequence spans 190 residues: B3 domain-containing protein Os02g0764100 (190 aa).

The segment at residues 17–121 is a DNA-binding region (TF-B3); that stretch reads FEKAVTPSDV…KLLFIDCKKN (105 aa).

Its subcellular location is the nucleus. In Oryza sativa subsp. japonica (Rice), this protein is B3 domain-containing protein Os02g0764100.